We begin with the raw amino-acid sequence, 299 residues long: Taste receptor type 2 member 16 (299 aa).

The Extracellular portion of the chain corresponds to 1–5 (MVPTQ). The helical transmembrane segment at 6 to 26 (VTIFSIIMYVLESLVIIVQSC) threads the bilayer. Topologically, residues 27 to 44 (TTVAVLFREWMHFQRLSP) are cytoplasmic. Residues 45–65 (VEIILISLGISHFCLQWTSML) traverse the membrane as a helical segment. Over 66 to 82 (YNFGTYSRPVLLFWKVS) the chain is Extracellular. The chain crosses the membrane as a helical span at residues 83–103 (VVWEFMNVLTFWLTSLLAVLY). At 104–125 (CVKVSSFSHPVFLWLRLKILKL) the chain is on the cytoplasmic side. Residues 126–146 (VLWLLLGALIASCLSIIPSVV) traverse the membrane as a helical segment. Residues 147 to 183 (KYHIQMELLTLDHLPKNSSLILRLQMFEWYFSNPFKM) are Extracellular-facing. Asn-163 carries N-linked (GlcNAc...) asparagine glycosylation. The helical transmembrane segment at 184–204 (IGFGVPFLVFLISIILLTVSL) threads the bilayer. Topologically, residues 205-233 (VQHWGQMKHYSSSSSSLRAQCTVLKSLAT) are cytoplasmic. Residues 234–254 (FFIFFTSYFLTIVVSFIGTVF) form a helical membrane-spanning segment. The Extracellular segment spans residues 255-258 (DKKS). The chain crosses the membrane as a helical span at residues 259–279 (WFWVCEAVIYGLVCIHFTSLM). Over 280–299 (MSNPTLKKALRLQFWSPESS) the chain is Cytoplasmic.

Belongs to the G-protein coupled receptor T2R family. Interacts with RTP3 and RTP4. As to expression, expressed in subsets of taste receptor cells of the tongue and palate epithelium and exclusively in gustducin-positive cells. Expressed in the antrum and fundus (part of the stomach), duodenum and in gastric endocrine cells.

The protein localises to the cell membrane. Gustducin-coupled receptor implicated in the perception of bitter compounds in the oral cavity and the gastrointestinal tract. Signals through PLCB2 and the calcium-regulated cation channel TRPM5. The sequence is that of Taste receptor type 2 member 16 (Tas2r16) from Rattus norvegicus (Rat).